The primary structure comprises 451 residues: Cytosolic Fe-S cluster assembly factor NAR1 (451 aa).

8 residues coordinate [4Fe-4S] cluster: cysteine 20, cysteine 56, cysteine 59, cysteine 62, cysteine 166, cysteine 213, cysteine 382, and cysteine 386.

This sequence belongs to the NARF family.

Its function is as follows. Component of the cytosolic Fe/S protein assembly machinery. Required for maturation of extramitochondrial Fe/S proteins. May play a role in the transfer of pre-assembled Fe/S clusters to target apoproteins. The chain is Cytosolic Fe-S cluster assembly factor NAR1 (NAR1) from Eremothecium gossypii (strain ATCC 10895 / CBS 109.51 / FGSC 9923 / NRRL Y-1056) (Yeast).